The sequence spans 205 residues: Guanylate kinase (205 aa).

In terms of domain architecture, Guanylate kinase-like spans 18 to 196 (PKLFTISAPA…AYQVLRSIFI (179 aa)). 25–32 (APAGAGKT) is an ATP binding site.

This sequence belongs to the guanylate kinase family.

Its subcellular location is the cytoplasm. The enzyme catalyses GMP + ATP = GDP + ADP. Essential for recycling GMP and indirectly, cGMP. In Chlamydia muridarum (strain MoPn / Nigg), this protein is Guanylate kinase (gmk).